The sequence spans 216 residues: Large ribosomal subunit protein uL3 (216 aa).

Positions 134-153 (RATHGNSRSHNVPGSIGMAQ) are disordered. At Q153 the chain carries N5-methylglutamine.

The protein belongs to the universal ribosomal protein uL3 family. Part of the 50S ribosomal subunit. Forms a cluster with proteins L14 and L19. Post-translationally, methylated by PrmB.

Its function is as follows. One of the primary rRNA binding proteins, it binds directly near the 3'-end of the 23S rRNA, where it nucleates assembly of the 50S subunit. The polypeptide is Large ribosomal subunit protein uL3 (Cupriavidus taiwanensis (strain DSM 17343 / BCRC 17206 / CCUG 44338 / CIP 107171 / LMG 19424 / R1) (Ralstonia taiwanensis (strain LMG 19424))).